The sequence spans 230 residues: 2,3-bisphosphoglycerate-dependent phosphoglycerate mutase (230 aa).

Residues 8–15 (RHGESEWN), 21–22 (TG), R60, 87–90 (ERHY), K98, 114–115 (RR), and 183–184 (GN) each bind substrate. The active-site Tele-phosphohistidine intermediate is H9. E87 (proton donor/acceptor) is an active-site residue.

It belongs to the phosphoglycerate mutase family. BPG-dependent PGAM subfamily.

The catalysed reaction is (2R)-2-phosphoglycerate = (2R)-3-phosphoglycerate. Its pathway is carbohydrate degradation; glycolysis; pyruvate from D-glyceraldehyde 3-phosphate: step 3/5. Its function is as follows. Catalyzes the interconversion of 2-phosphoglycerate and 3-phosphoglycerate. This is 2,3-bisphosphoglycerate-dependent phosphoglycerate mutase from Streptococcus sanguinis (strain SK36).